The primary structure comprises 284 residues: MSTSTQITKPYSTRALTHQSQTARRLLKLMSDKRTNLCASLDVTTSAELLSLADKLGPYICMVKTHVDIISDFTYDETVVKLVALAKKHGFMIFEDRKFADIGNTVKNQYSKGVYRIVEWADITNAHSVPGEGIINGLREAANEYVESEKAKGGECENLDRGLIMLAELSSKGSLATGSYTTKTVELAHNNSDFVFGFIAQNRMEEVQDSEGNYEDWLILTPGVGLDDKGDGLGQQYRTVDTVIKNGSDVIIVGRGLFGKGRDPVVEGKRYRDAGWKAYEERIN.

Substrate is bound by residues Asp-42, 64-66 (KTH), 96-105 (DRKFADIGNT), Tyr-237, and Arg-255. Lys-98 (proton donor) is an active-site residue.

It belongs to the OMP decarboxylase family.

The enzyme catalyses orotidine 5'-phosphate + H(+) = UMP + CO2. Its pathway is pyrimidine metabolism; UMP biosynthesis via de novo pathway; UMP from orotate: step 2/2. The chain is Orotidine 5'-phosphate decarboxylase (URA3) from Magnusiomyces magnusii (Yeast).